Consider the following 115-residue polypeptide: Class I hydrophobin 21 (115 aa).

The N-terminal stretch at 1–20 is a signal peptide; the sequence is MFAAPATMLVLAALAALSSA. Cystine bridges form between C30-C93, C37-C87, C38-C77, and C94-C107.

This sequence belongs to the fungal hydrophobin family. Self-assembles to form functional amyloid fibrils called rodlets. Self-assembly into fibrillar rodlets occurs spontaneously at hydrophobic:hydrophilic interfaces and the rodlets further associate laterally to form amphipathic monolayers.

It is found in the secreted. The protein resides in the cell wall. Aerial growth, conidiation, and dispersal of filamentous fungi in the environment rely upon a capability of their secreting small amphipathic proteins called hydrophobins (HPBs) with low sequence identity. Class I can self-assemble into an outermost layer of rodlet bundles on aerial cell surfaces, conferring cellular hydrophobicity that supports fungal growth, development and dispersal; whereas Class II form highly ordered films at water-air interfaces through intermolecular interactions but contribute nothing to the rodlet structure. In Pleurotus ostreatus (strain PC15) (Oyster mushroom), this protein is Class I hydrophobin 21.